The sequence spans 525 residues: Cytochrome P450 703A2 (525 aa).

The helical transmembrane segment at 3–23 (PFLLSIILCSWIFVVVSWKKL) threads the bilayer. A heme-binding site is contributed by cysteine 455.

Belongs to the cytochrome P450 family. Requires heme as cofactor.

The protein localises to the membrane. The enzyme catalyses dodecanoate + reduced [NADPH--hemoprotein reductase] + O2 = 7-hydroxydodecanoate + oxidized [NADPH--hemoprotein reductase] + H2O + H(+). Functionally, involved in pollen exine and anther epicuticular layer development. Catalyzes the in-chain hydroxylation of lauric acid (C12:0) preferentially on position 7, generating 7-hydroxylated lauric acid. Does not possess activity with other fatty acids (C14:0, C16:0, C16:1, and C18:0). Participates in a conserved pathway of in-chain hydroxylation of lauric acid required for anther cuticle and pollen exine formation. Directly regulated by TDR, a known regulator of tapetum programmed cell death (PCD) and pollen exine formation. The polypeptide is Cytochrome P450 703A2 (Oryza sativa subsp. japonica (Rice)).